The following is a 170-amino-acid chain: F107 fimbrial protein (170 aa).

The signal sequence occupies residues 1 to 21 (MKRLVFISFVALSMTAGSAMA). A disulfide bridge connects residues cysteine 37 and cysteine 78.

The protein belongs to the fimbrial protein family.

It localises to the fimbrium. Its function is as follows. Fimbriae (also called pili), polar filaments radiating from the surface of the bacterium to a length of 0.5-1.5 micrometers and numbering 100-300 per cell, enable bacteria to colonize the epithelium of specific host organs. The sequence is that of F107 fimbrial protein (fedA) from Escherichia coli.